The chain runs to 334 residues: Small ribosomal subunit protein RACK1z (334 aa).

WD repeat units follow at residues 16–47, 73–103, 115–145, 163–195, 207–237, 248–277, and 296–326; these read GHND…LVWD, GHSH…RLWD, GHDK…KLWN, GHNG…KVWN, GHGG…LLWD, DAGS…KIWD, and NQML…RIYK.

This sequence belongs to the WD repeat G protein beta family. Ribosomal protein RACK1 subfamily. As to quaternary structure, interacts with RAC1, RAC3, RAC6, RAR1, SGT1 and RBOHB. Homodimer and heterodimer with RACK1B. As to expression, widely expressed.

It localises to the cytoplasm. It is found in the cell membrane. Component of the RACK1 regulatory proteins that functions in innate immunity by interacting with multiple proteins in the RAC1 immune complex. Acts as a positive regulator of reactive oxygen species (ROS) production and is required for resistance against rice blast (M.grisea) infection. In Oryza sativa subsp. japonica (Rice), this protein is Small ribosomal subunit protein RACK1z (RACK1A).